The following is a 693-amino-acid chain: Periplasmic alpha-galactoside-binding protein (693 aa).

A signal peptide spans 1–20 (MKTHRLNMTASLLIGISAFA).

It belongs to the bacterial solute-binding protein 5 family.

It is found in the periplasm. Functionally, involved in the transport of alpha-galactosides. Required for the utilization of raffinose and melibiose. Probably acts as a periplasmic substrate-binding protein for a transport system. This chain is Periplasmic alpha-galactoside-binding protein, found in Rhizobium meliloti (strain 1021) (Ensifer meliloti).